Reading from the N-terminus, the 166-residue chain is 3-hydroxyacyl-[acyl-carrier-protein] dehydratase, mitochondrial (166 aa).

Residues 1 to 17 (MLAKTVFPRGLLVLRSF) constitute a mitochondrion transit peptide. One can recognise a MaoC-like domain in the interval 34 to 125 (ETRVFSSEDI…VQAIALRETK (92 aa)).

In terms of assembly, homodimer. Expressed in leaves, roots, siliques and flowers.

The protein localises to the mitochondrion. The enzyme catalyses a (3R)-hydroxyacyl-[ACP] = a (2E)-enoyl-[ACP] + H2O. It catalyses the reaction (3R)-hydroxyhexadecanoyl-[ACP] = (2E)-hexadecenoyl-[ACP] + H2O. The catalysed reaction is (3R)-hydroxydecanoyl-[ACP] = (2E)-decenoyl-[ACP] + H2O. Its pathway is lipid metabolism; fatty acid biosynthesis. Its function is as follows. 3-hydroxyl-[acyl-carrier-protein] (3-hydroxyl-ACP) dehydratase required for mitochondrial fatty acid synthesis (mtFAS). MtFAS are essential for photorespiration and plant development, probably by influencing mitochondrial membrane lipid composition and other lipid metabolic pathways. This Arabidopsis thaliana (Mouse-ear cress) protein is 3-hydroxyacyl-[acyl-carrier-protein] dehydratase, mitochondrial.